The sequence spans 1440 residues: Bridge-like lipid transfer protein family member 3A (1440 aa).

The region spanning 3-95 (GIIKKQILKH…KVEVEMKTCE (93 aa)) is the Chorein N-terminal domain. 3 disordered regions span residues 267-307 (SAHQ…NSSS), 430-456 (ADSL…FQPP), and 751-780 (KPSA…TEHD). The span at 287-307 (SAQQSWAQAFGGSQGNSNSSS) shows a compositional bias: low complexity. Residues Ser444, Ser446, Ser755, and Ser758 each carry the phosphoserine modification. Residues 837-860 (ALLRLKEVLQRLQEQLTKDTESMT) are a coiled coil. The segment at 891–1008 (VDADSAGSDS…ETAVNGQGEL (118 aa)) is disordered. Over residues 911-920 (SEDRELKSDA) the composition is skewed to basic and acidic residues. Low complexity predominate over residues 985–995 (ASSSPAALKPP). 3 positions are modified to phosphoserine: Ser988, Ser1103, and Ser1106. A disordered region spans residues 1106 to 1180 (SFDGVSLDSS…SPAANSSVSP (75 aa)). Low complexity predominate over residues 1134-1150 (LLESESGPESVPPGSLS). Positions 1151 to 1180 (NVSDNAGVQGSPLVNNYGQGSPAANSSVSP) are enriched in polar residues. Residues 1401–1435 (KELPILQKELIETKQALANANQDKEKLLQEIRKYN) adopt a coiled-coil conformation.

As to quaternary structure, homodimer (Potential). Interacts with UHRF1.

Its subcellular location is the late endosome. Its function is as follows. Tube-forming lipid transport protein which probably mediates the transfer of lipids between membranes at organelle contact sites. May be involved in the retrograde traffic of vesicle clusters in the endocytic pathway to the Golgi complex. This chain is Bridge-like lipid transfer protein family member 3A, found in Homo sapiens (Human).